Consider the following 313-residue polypeptide: Protein-methionine-sulfoxide reductase catalytic subunit MsrP (313 aa).

A signal peptide (tat-type signal) is located at residues 1 to 44; that stretch reads MARWRPDMAEREATPEALYLRRREFLALGAAGAVGLLVARGARA. Mo-molybdopterin is bound by residues Asn-76, 79 to 80, Cys-134, Thr-169, Asn-217, Arg-222, and 233 to 235; these read YE and GAK.

Belongs to the MsrP family. Heterodimer of a catalytic subunit (MsrP) and a heme-binding subunit (MsrQ). Requires Mo-molybdopterin as cofactor. Predicted to be exported by the Tat system. The position of the signal peptide cleavage has not been experimentally proven.

It is found in the periplasm. The enzyme catalyses L-methionyl-[protein] + a quinone + H2O = L-methionyl-(S)-S-oxide-[protein] + a quinol. The catalysed reaction is L-methionyl-[protein] + a quinone + H2O = L-methionyl-(R)-S-oxide-[protein] + a quinol. Part of the MsrPQ system that repairs oxidized periplasmic proteins containing methionine sulfoxide residues (Met-O), using respiratory chain electrons. Thus protects these proteins from oxidative-stress damage caused by reactive species of oxygen and chlorine generated by the host defense mechanisms. MsrPQ is essential for the maintenance of envelope integrity under bleach stress, rescuing a wide series of structurally unrelated periplasmic proteins from methionine oxidation. The catalytic subunit MsrP is non-stereospecific, being able to reduce both (R-) and (S-) diastereoisomers of methionine sulfoxide. The chain is Protein-methionine-sulfoxide reductase catalytic subunit MsrP from Anaeromyxobacter sp. (strain K).